Reading from the N-terminus, the 508-residue chain is Methionine--tRNA ligase (508 aa).

Residues 12-22 (YYVNDVAHIGH) carry the 'HIGH' region motif. Positions 295–299 (KISKS) match the 'KMSKS' region motif. Position 298 (lysine 298) interacts with ATP.

This sequence belongs to the class-I aminoacyl-tRNA synthetase family. MetG type 2B subfamily. Monomer.

Its subcellular location is the cytoplasm. It catalyses the reaction tRNA(Met) + L-methionine + ATP = L-methionyl-tRNA(Met) + AMP + diphosphate. In terms of biological role, is required not only for elongation of protein synthesis but also for the initiation of all mRNA translation through initiator tRNA(fMet) aminoacylation. The sequence is that of Methionine--tRNA ligase (metG) from Rickettsia prowazekii (strain Madrid E).